We begin with the raw amino-acid sequence, 389 residues long: Odorant receptor 85c (389 aa).

At 1 to 33 the chain is on the cytoplasmic side; it reads MKFMKYAVFFYTSVGIEPYTIDSRSKKASLWSH. A helical membrane pass occupies residues 34–54; the sequence is LLFWANVINLSVIVFGEILYL. Over 55 to 66 the chain is Extracellular; the sequence is GVAYSDGKFIDA. Residues 67–87 form a helical membrane-spanning segment; that stretch reads VTVLSYIGFVIVGMSKMFFIW. Over 88–130 the chain is Cytoplasmic; it reads WKKTDLSDLVKELEHIYPNGKAEEEMYRLDRYLRSCSRISITY. Residues 131-151 traverse the membrane as a helical segment; that stretch reads ALLYSVLIWTFNLFSIMQFLV. At 152 to 199 the chain is on the extracellular side; the sequence is YEKLLKIRVVGQTLPYLMYFPWNWHENWTYYVLLFCQNFAGHTSASGQ. Asparagine 178 is a glycosylation site (N-linked (GlcNAc...) asparagine). Residues 200 to 220 form a helical membrane-spanning segment; sequence ISTDLLLCAVATQVVMHFDYL. The Cytoplasmic segment spans residues 221–259; that stretch reads ARVVEKQVLDRDWSENSRFLAKTVQYHQRILRLMDVLND. A helical membrane pass occupies residues 260–280; that stretch reads IFGIPLLLNFMVSTFVICFVG. Residues 281–290 lie on the Extracellular side of the membrane; the sequence is FQMTVGVPPD. The chain crosses the membrane as a helical span at residues 291-311; it reads IMIKLFLFLFSSLSQVYLICH. At 312 to 359 the chain is on the cytoplasmic side; it reads YGQLIADASSSLSISAYKQNWQNADIRYRRALVFFIARPQRTTYLKAT. A helical membrane pass occupies residues 360 to 380; that stretch reads IFMNITRATMTDLLQVSYKFF. Over 381–389 the chain is Extracellular; it reads ALLRTMYIK.

Belongs to the insect chemoreceptor superfamily. Heteromeric odorant receptor channel (TC 1.A.69) family. Or49a subfamily. In terms of assembly, interacts with Orco. Complexes exist early in the endomembrane system in olfactory sensory neurons (OSNs), coupling these complexes to the conserved ciliary trafficking pathway.

Its subcellular location is the cell membrane. Odorant receptor which mediates acceptance or avoidance behavior, depending on its substrates. The odorant receptor repertoire encodes a large collection of odor stimuli that vary widely in identity, intensity, and duration. May form a complex with Orco to form odorant-sensing units, providing sensitive and prolonged odorant signaling and calcium permeability. The protein is Odorant receptor 85c (Or85c) of Drosophila melanogaster (Fruit fly).